The sequence spans 397 residues: Acetate kinase (397 aa).

Position 8 (Asn8) interacts with Mg(2+). An ATP-binding site is contributed by Lys15. Arg89 provides a ligand contact to substrate. Asp146 acts as the Proton donor/acceptor in catalysis. Residues 206–210, 281–283, and 329–333 each bind ATP; these read HLGNG, DLR, and GIGEN. Glu382 provides a ligand contact to Mg(2+).

It belongs to the acetokinase family. Homodimer. Mg(2+) is required as a cofactor. Requires Mn(2+) as cofactor.

The protein localises to the cytoplasm. It carries out the reaction acetate + ATP = acetyl phosphate + ADP. The protein operates within metabolic intermediate biosynthesis; acetyl-CoA biosynthesis; acetyl-CoA from acetate: step 1/2. Catalyzes the formation of acetyl phosphate from acetate and ATP. Can also catalyze the reverse reaction. The polypeptide is Acetate kinase (Geobacillus sp. (strain WCH70)).